The sequence spans 267 residues: MDKRPIGVMDSGLGGLSVIRVLREQLPQESVIFVGDQGHFPYGTKTKEQIQQLALRIGKFLLEQDVKMMIIACNTATAAALRLLQNELPIPVIGVIKPGAMAATQHHYKKIGVIGTESTIKNGAYAKTLAKLNPDLSVISSPAQPLVSIVEHGQTGTSEAQKAVDTELEVFDNQSIEALILGCTHFPFLQKEIHNKLGSNVQLIDPAFETIRQAKELLTGKNQLSDNLASSINLYSTGDAKDLVAGAQQWLPNGYSKCAHIELNEEG.

Residues 10–11 (DS) and 42–43 (YG) each bind substrate. Catalysis depends on Cys73, which acts as the Proton donor/acceptor. 74–75 (NT) serves as a coordination point for substrate. Cys183 acts as the Proton donor/acceptor in catalysis. 184 to 185 (TH) contacts substrate.

Belongs to the aspartate/glutamate racemases family.

It catalyses the reaction L-glutamate = D-glutamate. It participates in cell wall biogenesis; peptidoglycan biosynthesis. Provides the (R)-glutamate required for cell wall biosynthesis. This chain is Glutamate racemase, found in Limosilactobacillus reuteri (strain DSM 20016) (Lactobacillus reuteri).